Consider the following 189-residue polypeptide: MASKRALVILAKGAEEMETVIPVDIMRRAGIKVTVAGLAGKDPVQCSRDVVICPDTSLEEAKTQGPYDVVVLPGGNLGAQNLSESALVKEILKEQENRKGLIAAICAGPTALLAHEVGFGCKVTSHPLAKDKMMNGSHYSYSESRVEKDGLILTSRGPGTSFEFALAIVEALSGKDMANQVKAPLVLKD.

An N-acetylalanine modification is found at alanine 2. S-palmitoyl cysteine attachment occurs at residues cysteine 46 and cysteine 53. Tyrosine 67 bears the Phosphotyrosine mark. Cysteine 106 functions as the Nucleophile in the catalytic mechanism. Cysteine sulfinic acid (-SO2H); alternate is present on cysteine 106. Cysteine 106 carries the S-palmitoyl cysteine; alternate lipid modification. Histidine 126 is an active-site residue. A Glycyl lysine isopeptide (Lys-Gly) (interchain with G-Cter in SUMO) cross-link involves residue lysine 130. N6-acetyllysine is present on lysine 148. Lysine 182 is modified (N6-succinyllysine).

It belongs to the peptidase C56 family. As to quaternary structure, homodimer. Binds EFCAB6/DJBP and PIAS2. Part of a ternary complex containing PARK7, EFCAB6/DJBP and AR. Interacts (via N-terminus) with OTUD7B. Interacts with BBS1, HIPK1, CLCF1 and MTERF. Forms a complex with PINK1 and PRKN. Interacts (via C-terminus) with NCF1; the interaction is enhanced by LPS and modulates NCF1 phosphorylation and membrane translocation. Interacts with NENF. The cofactor is Deglycase activity does not require glutathione as a cofactor, however, glycated glutathione constitutes a PARK7 substrate.. Post-translationally, sumoylated on Lys-130 by PIAS2 or PIAS4; which is essential for cell-growth promoting activity and transforming activity. Undergoes cleavage of a C-terminal peptide and subsequent activation of protease activity in response to oxidative stress. Ubiquitous. Detected on epididymal sperm. Highly expressed in testis and prostate. Detected at lower levels in heart, lung, brain, liver, kidney, seminal vesicle, caput and corpus epididymis.

The protein resides in the cell membrane. It localises to the cytoplasm. It is found in the membrane raft. The protein localises to the nucleus. Its subcellular location is the mitochondrion. The protein resides in the endoplasmic reticulum. The enzyme catalyses N(omega)-(1-hydroxy-2-oxopropyl)-L-arginyl-[protein] + H2O = lactate + L-arginyl-[protein] + H(+). It catalyses the reaction N(6)-(1-hydroxy-2-oxopropyl)-L-lysyl-[protein] + H2O = lactate + L-lysyl-[protein] + H(+). It carries out the reaction S-(1-hydroxy-2-oxopropyl)-L-cysteinyl-[protein] + H2O = lactate + L-cysteinyl-[protein] + H(+). The catalysed reaction is N(omega)-(1-hydroxy-2-oxoethyl)-L-arginyl-[protein] + H2O = L-arginyl-[protein] + glycolate + H(+). The enzyme catalyses N(6)-(1-hydroxy-2-oxoethyl)-L-lysyl-[protein] + H2O = glycolate + L-lysyl-[protein] + H(+). It catalyses the reaction S-(1-hydroxy-2-oxoethyl)-L-cysteinyl-[protein] + H2O = glycolate + L-cysteinyl-[protein] + H(+). It carries out the reaction N(2)-(1-hydroxy-2-oxopropyl)-dGTP + H2O = lactate + dGTP + H(+). The catalysed reaction is N(2)-(1-hydroxy-2-oxopropyl)-GTP + H2O = lactate + GTP + H(+). The enzyme catalyses N(2)-(1-hydroxy-2-oxopropyl)-GDP + H2O = lactate + GDP + H(+). It catalyses the reaction N(2)-(1-hydroxy-2-oxopropyl)-GMP + H2O = lactate + GMP + H(+). It carries out the reaction N(2)-(1-hydroxy-2-oxoethyl)-dGTP + H2O = dGTP + glycolate + H(+). The catalysed reaction is N(2)-(1-hydroxy-2-oxoethyl)-GTP + H2O = glycolate + GTP + H(+). The enzyme catalyses N(2)-(1-hydroxy-2-oxoethyl)-GDP + H2O = glycolate + GDP + H(+). It catalyses the reaction N(2)-(1-hydroxy-2-oxoethyl)-GMP + H2O = glycolate + GMP + H(+). It carries out the reaction an N(2)-(1-hydroxy-2-oxopropyl)-guanosine in RNA + H2O = a guanosine in RNA + lactate + H(+). The catalysed reaction is an N(2)-(1-hydroxy-2-oxopropyl)-2'-deoxyguanosine in DNA + H2O = a 2'-deoxyguanosine in DNA + lactate + H(+). The enzyme catalyses an N(2)-(1-hydroxy-2-oxoethyl)-guanosine in RNA + H2O = a guanosine in RNA + glycolate + H(+). It catalyses the reaction an N(2)-(1-hydroxy-2-oxoethyl)-2'-deoxyguanosine in DNA + H2O = a 2'-deoxyguanosine in DNA + glycolate + H(+). Functionally, protein and nucleotide deglycase that catalyzes the deglycation of the Maillard adducts formed between amino groups of proteins or nucleotides and reactive carbonyl groups of glyoxals. Thus, functions as a protein deglycase that repairs methylglyoxal- and glyoxal-glycated proteins, and releases repaired proteins and lactate or glycolate, respectively. Deglycates cysteine, arginine and lysine residues in proteins, and thus reactivates these proteins by reversing glycation by glyoxals. Acts on early glycation intermediates (hemithioacetals and aminocarbinols), preventing the formation of advanced glycation endproducts (AGE) that cause irreversible damage. Also functions as a nucleotide deglycase able to repair glycated guanine in the free nucleotide pool (GTP, GDP, GMP, dGTP) and in DNA and RNA. Is thus involved in a major nucleotide repair system named guanine glycation repair (GG repair), dedicated to reversing methylglyoxal and glyoxal damage via nucleotide sanitization and direct nucleic acid repair. Also displays an apparent glyoxalase activity that in fact reflects its deglycase activity. Plays an important role in cell protection against oxidative stress and cell death acting as oxidative stress sensor and redox-sensitive chaperone and protease; functions probably related to its primary function. It is involved in neuroprotective mechanisms like the stabilization of NFE2L2 and PINK1 proteins, male fertility as a positive regulator of androgen signaling pathway as well as cell growth and transformation through, for instance, the modulation of NF-kappa-B signaling pathway. Eliminates hydrogen peroxide and protects cells against hydrogen peroxide-induced cell death. Required for correct mitochondrial morphology and function as well as for autophagy of dysfunctional mitochondria. Plays a role in regulating expression or stability of the mitochondrial uncoupling proteins SLC25A14 and SLC25A27 in dopaminergic neurons of the substantia nigra pars compacta and attenuates the oxidative stress induced by calcium entry into the neurons via L-type channels during pacemaking. Regulates astrocyte inflammatory responses, may modulate lipid rafts-dependent endocytosis in astrocytes and neuronal cells. In pancreatic islets, involved in the maintenance of mitochondrial reactive oxygen species (ROS) levels and glucose homeostasis in an age- and diet dependent manner. Protects pancreatic beta cells from cell death induced by inflammatory and cytotoxic setting. Binds to a number of mRNAs containing multiple copies of GG or CC motifs and partially inhibits their translation but dissociates following oxidative stress. Metal-binding protein able to bind copper as well as toxic mercury ions, enhances the cell protection mechanism against induced metal toxicity. In macrophages, interacts with the NADPH oxidase subunit NCF1 to direct NADPH oxidase-dependent ROS production, and protects against sepsis. This is Parkinson disease protein 7 homolog from Rattus norvegicus (Rat).